The primary structure comprises 225 residues: Ribonuclease 3 (225 aa).

One can recognise an RNase III domain in the interval 5 to 127; it reads IDKLERKLGY…IIGAIYLDSD (123 aa). E40 contributes to the Mg(2+) binding site. D44 is a catalytic residue. D113 and E116 together coordinate Mg(2+). E116 is a catalytic residue. In terms of domain architecture, DRBM spans 154–224; the sequence is DPKTRLQEFL…AETALEQLTN (71 aa).

This sequence belongs to the ribonuclease III family. Homodimer. The cofactor is Mg(2+).

The protein resides in the cytoplasm. The enzyme catalyses Endonucleolytic cleavage to 5'-phosphomonoester.. Digests double-stranded RNA. Involved in the processing of primary rRNA transcript to yield the immediate precursors to the large and small rRNAs (23S and 16S). Processes some mRNAs, and tRNAs when they are encoded in the rRNA operon. Processes pre-crRNA and tracrRNA of type II CRISPR loci if present in the organism. This is Ribonuclease 3 from Vibrio campbellii (strain ATCC BAA-1116).